Here is a 132-residue protein sequence, read N- to C-terminus: Small ribosomal subunit protein uS8 (132 aa).

The protein belongs to the universal ribosomal protein uS8 family. In terms of assembly, part of the 30S ribosomal subunit. Contacts proteins S5 and S12.

In terms of biological role, one of the primary rRNA binding proteins, it binds directly to 16S rRNA central domain where it helps coordinate assembly of the platform of the 30S subunit. This is Small ribosomal subunit protein uS8 from Lactococcus lactis subsp. cremoris (strain MG1363).